We begin with the raw amino-acid sequence, 263 residues long: Homeobox protein CDX-1 (263 aa).

Residues 47 to 108 form a disordered region; that stretch reads PGINSDPHHG…VQPPGSGLLP (62 aa). Polar residues predominate over residues 82–97; the sequence is SSANPTQIAFSPSDYN. Positions 150–209 form a DNA-binding region, homeobox; the sequence is KDKYRVVYTDHQRLELEKEFHYSRYITIRRKAELAAALGLTERQVKIWFQNRRAKERKVN. The interaction with DNA stretch occupies residues 153-174; that stretch reads YRVVYTDHQRLELEKEFHYSRY. The tract at residues 192-203 is interaction with 5-mCpG DNA; that stretch reads RQVKIWFQNRRA. Over residues 204–213 the composition is skewed to basic residues; the sequence is KERKVNKKKM. The interval 204–263 is disordered; the sequence is KERKVNKKKMQQQSQQASTTTPTPPSVGTTAGMGGLCSSSSSNSNLVSPSSMPIKEEYLS. Low complexity-rich tracts occupy residues 214-233 and 241-254; these read QQQSQQASTTTPTPPSVGTT and SSSSSNSNLVSPSS.

It belongs to the Caudal homeobox family.

The protein resides in the nucleus. In terms of biological role, plays a role in transcriptional regulation. Involved in activated KRAS-mediated transcriptional activation of PRKD1. Binds to the PRKD1 promoter. Could play a role in the terminal differentiation of the intestine. Binds preferentially to methylated DNA. In Xenopus laevis (African clawed frog), this protein is Homeobox protein CDX-1 (cdx1).